The chain runs to 274 residues: NADPH-dependent 7-cyano-7-deazaguanine reductase (274 aa).

80–82 (VES) serves as a coordination point for substrate. Position 82 to 83 (82 to 83 (SK)) interacts with NADPH. Cys181 functions as the Thioimide intermediate in the catalytic mechanism. The Proton donor role is filled by Asp188. 220-221 (HE) serves as a coordination point for substrate. An NADPH-binding site is contributed by 249 to 250 (RG).

It belongs to the GTP cyclohydrolase I family. QueF type 2 subfamily. Homodimer.

The protein resides in the cytoplasm. It catalyses the reaction 7-aminomethyl-7-carbaguanine + 2 NADP(+) = 7-cyano-7-deazaguanine + 2 NADPH + 3 H(+). It functions in the pathway tRNA modification; tRNA-queuosine biosynthesis. Functionally, catalyzes the NADPH-dependent reduction of 7-cyano-7-deazaguanine (preQ0) to 7-aminomethyl-7-deazaguanine (preQ1). In Burkholderia pseudomallei (strain 1710b), this protein is NADPH-dependent 7-cyano-7-deazaguanine reductase.